Here is a 100-residue protein sequence, read N- to C-terminus: Small ribosomal subunit protein uS14 (100 aa).

The protein belongs to the universal ribosomal protein uS14 family. Part of the 30S ribosomal subunit. Contacts proteins S3 and S10.

In terms of biological role, binds 16S rRNA, required for the assembly of 30S particles and may also be responsible for determining the conformation of the 16S rRNA at the A site. In Parasynechococcus marenigrum (strain WH8102), this protein is Small ribosomal subunit protein uS14.